A 98-amino-acid chain; its full sequence is Small ribosomal subunit protein bS20 (98 aa).

It belongs to the bacterial ribosomal protein bS20 family.

Its function is as follows. Binds directly to 16S ribosomal RNA. In Kosmotoga olearia (strain ATCC BAA-1733 / DSM 21960 / TBF 19.5.1), this protein is Small ribosomal subunit protein bS20.